Reading from the N-terminus, the 322-residue chain is Phosphatidylserine decarboxylase proenzyme (322 aa).

Active-site charge relay system; for autoendoproteolytic cleavage activity residues include Asp90, His147, and Ser254. Catalysis depends on Ser254, which acts as the Schiff-base intermediate with substrate; via pyruvic acid; for decarboxylase activity. Ser254 carries the post-translational modification Pyruvic acid (Ser); by autocatalysis. A disordered region spans residues 293–322 (PDAEPAPLPAEEIEAEHDASPLVDDKKDQV). Over residues 308–322 (EHDASPLVDDKKDQV) the composition is skewed to basic and acidic residues.

The protein belongs to the phosphatidylserine decarboxylase family. PSD-B subfamily. Prokaryotic type I sub-subfamily. As to quaternary structure, heterodimer of a large membrane-associated beta subunit and a small pyruvoyl-containing alpha subunit. Pyruvate is required as a cofactor. In terms of processing, is synthesized initially as an inactive proenzyme. Formation of the active enzyme involves a self-maturation process in which the active site pyruvoyl group is generated from an internal serine residue via an autocatalytic post-translational modification. Two non-identical subunits are generated from the proenzyme in this reaction, and the pyruvate is formed at the N-terminus of the alpha chain, which is derived from the carboxyl end of the proenzyme. The autoendoproteolytic cleavage occurs by a canonical serine protease mechanism, in which the side chain hydroxyl group of the serine supplies its oxygen atom to form the C-terminus of the beta chain, while the remainder of the serine residue undergoes an oxidative deamination to produce ammonia and the pyruvoyl prosthetic group on the alpha chain. During this reaction, the Ser that is part of the protease active site of the proenzyme becomes the pyruvoyl prosthetic group, which constitutes an essential element of the active site of the mature decarboxylase.

It is found in the cell membrane. The enzyme catalyses a 1,2-diacyl-sn-glycero-3-phospho-L-serine + H(+) = a 1,2-diacyl-sn-glycero-3-phosphoethanolamine + CO2. Its pathway is phospholipid metabolism; phosphatidylethanolamine biosynthesis; phosphatidylethanolamine from CDP-diacylglycerol: step 2/2. Functionally, catalyzes the formation of phosphatidylethanolamine (PtdEtn) from phosphatidylserine (PtdSer). The polypeptide is Phosphatidylserine decarboxylase proenzyme (Escherichia coli O139:H28 (strain E24377A / ETEC)).